We begin with the raw amino-acid sequence, 238 residues long: Chromosome partition protein MukE (238 aa).

Belongs to the MukE family. Interacts, and probably forms a ternary complex, with MukF and MukB. The complex formation is stimulated by calcium or magnesium.

The protein localises to the cytoplasm. It is found in the nucleoid. Functionally, involved in chromosome condensation, segregation and cell cycle progression. May participate in facilitating chromosome segregation by condensation DNA from both sides of a centrally located replisome during cell division. Probably acts via its interaction with MukB and MukF. This is Chromosome partition protein MukE from Haemophilus ducreyi (strain 35000HP / ATCC 700724).